Consider the following 574-residue polypeptide: Multidrug and toxin extrusion protein 1 (574 aa).

The Cytoplasmic portion of the chain corresponds to 1–51 (MEGQAAETNHRAETVVRAELCLSAEQGPETTAYSQKRCLFLPMEVWQEAQQ). The helical transmembrane segment at 52 to 72 (LLALAAPAFLSQLMIFLISIV) threads the bilayer. Topologically, residues 73 to 86 (SSIFCGHLGKVELD) are extracellular. The chain crosses the membrane as a helical span at residues 87-107 (AVSLAITIINITGVAVGTGLA). Residues 108 to 133 (GACDTLISQTFGGSNLKLVGIILQRG) lie on the Cytoplasmic side of the membrane. Residues 134 to 154 (ILILLLFCFPCWALLINTESI) traverse the membrane as a helical segment. The Extracellular segment spans residues 155–168 (LLLFRQDPEVSKLT). Residues 169–189 (QIYVLIFLPALPAAFLYQLLA) traverse the membrane as a helical segment. Residues 190 to 204 (KYLQNQGIIYPQVLT) lie on the Cytoplasmic side of the membrane. A helical transmembrane segment spans residues 205-225 (GFIANIFNALFNYILLYVLGL). Over 226–230 (GVMGS) the chain is Extracellular. The helical transmembrane segment at 231–251 (ACANTVSQFIQMILLFLYIVW) threads the bilayer. Residues 252–271 (RRLYADTWGGWSQACFEEWG) lie on the Cytoplasmic side of the membrane. A helical transmembrane segment spans residues 272-291 (AFIRLAVASMLMLCIEWWAF). At 292 to 309 (EISMFLAGVLGMVDLAAQ) the chain is on the extracellular side. A helical membrane pass occupies residues 310–330 (AIIYQVAIVVYLIPLGLCIAG). Residues 331–350 (SIRVGHGLGAGNTEQAKRSA) lie on the Cytoplasmic side of the membrane. A helical transmembrane segment spans residues 351–371 (LVVLCMTELCALLSGILLATL). The Extracellular portion of the chain corresponds to 372 to 384 (KDVVAYIFTSDPN). Residues 385-405 (IVALVSYVLPVYSACLLFDAC) form a helical membrane-spanning segment. The Cytoplasmic segment spans residues 406–430 (VAACGGILRGSGKLKVGAISHTVGY). Residues 431–451 (YVIGLPLGISLMFAAKLGIIG) form a helical membrane-spanning segment. Residues 452–453 (FW) lie on the Extracellular side of the membrane. Residues 454 to 472 (FGILACGIAQSIFLIIFVF) traverse the membrane as a helical segment. Topologically, residues 473 to 549 (KIDWKRASEE…AGAAQHTRTL (77 aa)) are cytoplasmic. Residues 500–541 (KPSVYQEGCPTEQGDVDPGNVESIEFSQSSTSSEGTSPTPAG) are disordered. Positions 521–538 (ESIEFSQSSTSSEGTSPT) are enriched in low complexity. A helical transmembrane segment spans residues 550-570 (ILTRGLALGCAVGTLIIGIVI). The Extracellular portion of the chain corresponds to 571–574 (RLSV).

The protein belongs to the multi antimicrobial extrusion (MATE) (TC 2.A.66.1) family.

The protein resides in the cell membrane. It is found in the apical cell membrane. The enzyme catalyses thiamine(out) + H(+)(in) = thiamine(in) + H(+)(out). It carries out the reaction estrone 3-sulfate(in) + H(+)(out) = estrone 3-sulfate(out) + H(+)(in). It catalyses the reaction creatinine(in) + H(+)(out) = creatinine(out) + H(+)(in). The catalysed reaction is agmatine(in) + H(+)(out) = agmatine(out) + H(+)(in). Its function is as follows. Multidrug efflux pump that functions as a H(+)/organic cation antiporter. Mediates the secretion of cationic compounds including drugs, toxins and endogenous metabolites. Plays a role physiological role in the excretion of drugs, toxins and endogenous metabolites through the kidney and liver, into urine and bile respectively. The sequence is that of Multidrug and toxin extrusion protein 1 (slc47a1) from Xenopus tropicalis (Western clawed frog).